A 272-amino-acid chain; its full sequence is Protein alcS (272 aa).

Polar residues predominate over residues 1–14 (MDTEQGLKNHTAKT). Residues 1-21 (MDTEQGLKNHTAKTSPHDETA) are disordered. The next 6 membrane-spanning stretches (helical) occupy residues 63–83 (PLAL…LMGW), 91–111 (IAFT…TSIL), 122–144 (VVFG…AFNA), 164–184 (FLNT…IFLA), 192–212 (VYVA…GAYW), and 225–245 (LVVA…YLLV).

The protein belongs to the acetate uptake transporter (AceTr) (TC 2.A.96) family.

The protein resides in the cell membrane. Its subcellular location is the cell septum. This is Protein alcS from Aspergillus fumigatus (strain CBS 144.89 / FGSC A1163 / CEA10) (Neosartorya fumigata).